A 190-amino-acid chain; its full sequence is Threonylcarbamoyl-AMP synthase (190 aa).

The YrdC-like domain occupies 7 to 190 (GDAIAAAIDV…ALTGELFRQG (184 aa)).

This sequence belongs to the SUA5 family. TsaC subfamily.

It is found in the cytoplasm. The enzyme catalyses L-threonine + hydrogencarbonate + ATP = L-threonylcarbamoyladenylate + diphosphate + H2O. Functionally, required for the formation of a threonylcarbamoyl group on adenosine at position 37 (t(6)A37) in tRNAs that read codons beginning with adenine. Catalyzes the conversion of L-threonine, HCO(3)(-)/CO(2) and ATP to give threonylcarbamoyl-AMP (TC-AMP) as the acyladenylate intermediate, with the release of diphosphate. In Shigella flexneri, this protein is Threonylcarbamoyl-AMP synthase.